Consider the following 334-residue polypeptide: Phosphate acyltransferase (334 aa).

The protein belongs to the PlsX family. Homodimer. Probably interacts with PlsY.

Its subcellular location is the cytoplasm. The enzyme catalyses a fatty acyl-[ACP] + phosphate = an acyl phosphate + holo-[ACP]. Its pathway is lipid metabolism; phospholipid metabolism. Its function is as follows. Catalyzes the reversible formation of acyl-phosphate (acyl-PO(4)) from acyl-[acyl-carrier-protein] (acyl-ACP). This enzyme utilizes acyl-ACP as fatty acyl donor, but not acyl-CoA. The polypeptide is Phosphate acyltransferase (Clostridium tetani (strain Massachusetts / E88)).